Consider the following 227-residue polypeptide: Lipoprotein-releasing system ATP-binding protein LolD (227 aa).

The ABC transporter domain maps to 5-227 (LICQNITKHY…QDGILRESNS (223 aa)). 41–48 (GSSGSGKS) is an ATP binding site.

Belongs to the ABC transporter superfamily. Lipoprotein translocase (TC 3.A.1.125) family. The complex is composed of two ATP-binding proteins (LolD) and two transmembrane proteins (LolC and LolE).

It localises to the cell inner membrane. Part of the ABC transporter complex LolCDE involved in the translocation of mature outer membrane-directed lipoproteins, from the inner membrane to the periplasmic chaperone, LolA. Responsible for the formation of the LolA-lipoprotein complex in an ATP-dependent manner. This is Lipoprotein-releasing system ATP-binding protein LolD from Histophilus somni (strain 129Pt) (Haemophilus somnus).